The primary structure comprises 464 residues: NADH dehydrogenase [ubiquinone] flavoprotein 1, mitochondrial (464 aa).

Residues 1–20 constitute a mitochondrion transit peptide; that stretch reads MLAARHFLGGLVPVRVSVRF. Residue K81 is modified to N6-acetyllysine; alternate. N6-succinyllysine; alternate is present on K81. 87–96 is a binding site for NADH; it reads GRGGAGFPTG. Residue K104 is modified to N6-acetyllysine. 199–247 provides a ligand contact to FMN; the sequence is RGAGAYICGEETALIESIEGKQGKPRLKPPFPADVGVFGCPTTVANVET. R257 carries the post-translational modification Omega-N-methylarginine. K375 is modified (N6-acetyllysine). The [4Fe-4S] cluster site is built by C379, C382, C385, and C425.

This sequence belongs to the complex I 51 kDa subunit family. In terms of assembly, core subunit of respiratory chain NADH dehydrogenase (Complex I) which is composed of 45 different subunits. This is a component of the flavoprotein-sulfur (FP) fragment of the enzyme. Interacts with RAB5IF. It depends on FMN as a cofactor. [4Fe-4S] cluster serves as cofactor.

Its subcellular location is the mitochondrion inner membrane. The enzyme catalyses a ubiquinone + NADH + 5 H(+)(in) = a ubiquinol + NAD(+) + 4 H(+)(out). Core subunit of the mitochondrial membrane respiratory chain NADH dehydrogenase (Complex I) which catalyzes electron transfer from NADH through the respiratory chain, using ubiquinone as an electron acceptor. Part of the peripheral arm of the enzyme, where the electrons from NADH are accepted by flavin mononucleotide (FMN) and then passed along a chain of iron-sulfur clusters by electron tunnelling to the final acceptor ubiquinone. Contains FMN, which is the initial electron acceptor as well as one iron-sulfur cluster. The protein is NADH dehydrogenase [ubiquinone] flavoprotein 1, mitochondrial of Mus musculus (Mouse).